The chain runs to 437 residues: tRNA-2-methylthio-N(6)-dimethylallyladenosine synthase (437 aa).

The region spanning Met1–Ala115 is the MTTase N-terminal domain. [4Fe-4S] cluster contacts are provided by Cys10, Cys46, Cys78, Cys148, Cys152, and Cys155. The Radical SAM core domain occupies Lys134–Glu367. Positions Lys370–Gly436 constitute a TRAM domain.

This sequence belongs to the methylthiotransferase family. MiaB subfamily. Monomer. [4Fe-4S] cluster is required as a cofactor.

The protein resides in the cytoplasm. The enzyme catalyses N(6)-dimethylallyladenosine(37) in tRNA + (sulfur carrier)-SH + AH2 + 2 S-adenosyl-L-methionine = 2-methylsulfanyl-N(6)-dimethylallyladenosine(37) in tRNA + (sulfur carrier)-H + 5'-deoxyadenosine + L-methionine + A + S-adenosyl-L-homocysteine + 2 H(+). Its function is as follows. Catalyzes the methylthiolation of N6-(dimethylallyl)adenosine (i(6)A), leading to the formation of 2-methylthio-N6-(dimethylallyl)adenosine (ms(2)i(6)A) at position 37 in tRNAs that read codons beginning with uridine. In Helicobacter pylori (strain Shi470), this protein is tRNA-2-methylthio-N(6)-dimethylallyladenosine synthase.